The sequence spans 449 residues: Tubulin alpha-1C chain (449 aa).

Residues 1–4 (MREC) carry the MREC motif motif. Residue Gln11 coordinates GTP. Residue Lys40 is modified to N6-acetyllysine. GTP-binding residues include Glu71, Ser140, Gly144, Thr145, Thr179, Asn206, and Asn228. Mg(2+) is bound at residue Glu71. Glu254 is an active-site residue. Tyr282 carries the post-translational modification 3'-nitrotyrosine. Tyr432 is modified (phosphotyrosine). At Ser439 the chain carries Phosphoserine. Tyr449 is modified (3'-nitrotyrosine).

The protein belongs to the tubulin family. As to quaternary structure, dimer of alpha and beta chains. A typical microtubule is a hollow water-filled tube with an outer diameter of 25 nm and an inner diameter of 15 nM. Alpha-beta heterodimers associate head-to-tail to form protofilaments running lengthwise along the microtubule wall with the beta-tubulin subunit facing the microtubule plus end conferring a structural polarity. Microtubules usually have 13 protofilaments but different protofilament numbers can be found in some organisms and specialized cells. Mg(2+) serves as cofactor. Post-translationally, some glutamate residues at the C-terminus are polyglycylated, resulting in polyglycine chains on the gamma-carboxyl group. Glycylation is mainly limited to tubulin incorporated into axonemes (cilia and flagella) whereas glutamylation is prevalent in neuronal cells, centrioles, axonemes, and the mitotic spindle. Both modifications can coexist on the same protein on adjacent residues, and lowering polyglycylation levels increases polyglutamylation, and reciprocally. Cilia and flagella glycylation is required for their stability and maintenance. Flagella glycylation controls sperm motility. In terms of processing, some glutamate residues at the C-terminus are polyglutamylated, resulting in polyglutamate chains on the gamma-carboxyl group. Polyglutamylation plays a key role in microtubule severing by spastin (SPAST). SPAST preferentially recognizes and acts on microtubules decorated with short polyglutamate tails: severing activity by SPAST increases as the number of glutamates per tubulin rises from one to eight, but decreases beyond this glutamylation threshold. Glutamylation is also involved in cilia motility. Acetylation of alpha chains at Lys-40 is located inside the microtubule lumen. This modification has been correlated with increased microtubule stability, intracellular transport and ciliary assembly. Post-translationally, methylation of alpha chains at Lys-40 is found in mitotic microtubules and is required for normal mitosis and cytokinesis contributing to genomic stability. In terms of processing, nitration of Tyr-449 is irreversible and interferes with normal dynein intracellular distribution. Undergoes a tyrosination/detyrosination cycle, the cyclic removal and re-addition of a C-terminal tyrosine residue by the enzymes tubulin tyrosine carboxypeptidase (MATCAP1, VASH1 or VASH2) and tubulin tyrosine ligase (TTL), respectively. Post-translationally, tyrosination promotes microtubule interaction with CAP-Gly domain-containing proteins such as CLIP1, CLIP2 and DCTN1. Tyrosination regulates the initiation of dynein-dynactin motility via interaction with DCTN1, which brings the dynein-dynactin complex into contact with microtubules. In neurons, tyrosinated tubulins mediate the initiation of retrograde vesicle transport. In terms of processing, detyrosination is involved in metaphase plate congression by guiding chromosomes during mitosis: detyrosination promotes interaction with CENPE, promoting pole-proximal transport of chromosomes toward the equator. Detyrosination increases microtubules-dependent mechanotransduction in dystrophic cardiac and skeletal muscle. In cardiomyocytes, detyrosinated microtubules are required to resist to contractile compression during contraction: detyrosination promotes association with desmin (DES) at force-generating sarcomeres, leading to buckled microtubules and mechanical resistance to contraction. As to expression, minor alpha-tubulin expressed in all tissues.

It localises to the cytoplasm. The protein localises to the cytoskeleton. It catalyses the reaction GTP + H2O = GDP + phosphate + H(+). In terms of biological role, tubulin is the major constituent of microtubules, a cylinder consisting of laterally associated linear protofilaments composed of alpha- and beta-tubulin heterodimers. Microtubules grow by the addition of GTP-tubulin dimers to the microtubule end, where a stabilizing cap forms. Below the cap, tubulin dimers are in GDP-bound state, owing to GTPase activity of alpha-tubulin. This is Tubulin alpha-1C chain (Tuba1c) from Mus musculus (Mouse).